We begin with the raw amino-acid sequence, 366 residues long: Probable trehalose-phosphate phosphatase 3 (366 aa).

Belongs to the trehalose phosphatase family. It depends on a divalent metal cation as a cofactor.

It carries out the reaction alpha,alpha-trehalose 6-phosphate + H2O = alpha,alpha-trehalose + phosphate. It functions in the pathway glycan biosynthesis; trehalose biosynthesis. Functionally, removes the phosphate from trehalose 6-phosphate to produce free trehalose. Trehalose accumulation in plant may improve abiotic stress tolerance. This is Probable trehalose-phosphate phosphatase 3 (TPP3) from Oryza sativa subsp. japonica (Rice).